The following is a 1222-amino-acid chain: BOS complex subunit NOMO1 (1222 aa).

Residues 1–31 (MLVGQGAGPLGPAVVTAAVVLLLSGVGPAHG) form the signal peptide. At 32–1155 (SEDIVVGCGG…NPTRKLPEQD (1124 aa)) the chain is on the extracellular side. N-linked (GlcNAc...) asparagine glycans are attached at residues Asn50, Asn218, and Asn618. Residues 1156-1176 (IAQGSYIALPLTLLVLLAGYN) form a helical membrane-spanning segment. The Cytoplasmic segment spans residues 1177-1222 (HDKLIPLLLQLTSRLQGVRALGQAASDNSGPEDAKRQAKKQKTRRT). The segment at 1198–1222 (GQAASDNSGPEDAKRQAKKQKTRRT) is disordered. Ser1205 is subject to Phosphoserine. Over residues 1213–1222 (QAKKQKTRRT) the composition is skewed to basic residues.

As to quaternary structure, component of the back of Sec61 (BOS) complex, composed of NCLN/Nicalin, NOMO (NOMO1, NOMO2 or NOMO3) and TMEM147. The BOS complex is part of the multi-pass translocon (MPT) complex, composed of three subcomplexes, the GEL complex (composed of RAB5IF/OPTI and TMCO1), the BOS complex (composed of NCLN/Nicalin, NOMO and TMEM147) and the PAT complex (composed of WDR83OS/Asterix and CCDC47). The MPT complex associates with the SEC61 complex. Due to the strong similarity between NOMO1, NOMO2 and NOMO3, similar interaction pattern probably occur for the three gene copies. As to expression, expressed in colon tumor tissue and in adjacent normal colonic mucosa.

The protein localises to the endoplasmic reticulum membrane. Its function is as follows. Component of the multi-pass translocon (MPT) complex that mediates insertion of multi-pass membrane proteins into the lipid bilayer of membranes. The MPT complex takes over after the SEC61 complex: following membrane insertion of the first few transmembrane segments of proteins by the SEC61 complex, the MPT complex occludes the lateral gate of the SEC61 complex to promote insertion of subsequent transmembrane regions. This chain is BOS complex subunit NOMO1 (NOMO1), found in Homo sapiens (Human).